The chain runs to 81 residues: ATP synthase subunit c (81 aa).

Transmembrane regions (helical) follow at residues 6–26 and 57–77; these read AAASVIAAALAVGLGAIGPGI and LAFMESLTIYGLVIALVLLFA.

This sequence belongs to the ATPase C chain family. F-type ATPases have 2 components, F(1) - the catalytic core - and F(0) - the membrane proton channel. F(1) has five subunits: alpha(3), beta(3), gamma(1), delta(1), epsilon(1). F(0) has four main subunits: a(1), b(1), b'(1) and c(10-14). The alpha and beta chains form an alternating ring which encloses part of the gamma chain. F(1) is attached to F(0) by a central stalk formed by the gamma and epsilon chains, while a peripheral stalk is formed by the delta, b and b' chains.

The protein localises to the cellular thylakoid membrane. F(1)F(0) ATP synthase produces ATP from ADP in the presence of a proton or sodium gradient. F-type ATPases consist of two structural domains, F(1) containing the extramembraneous catalytic core and F(0) containing the membrane proton channel, linked together by a central stalk and a peripheral stalk. During catalysis, ATP synthesis in the catalytic domain of F(1) is coupled via a rotary mechanism of the central stalk subunits to proton translocation. Its function is as follows. Key component of the F(0) channel; it plays a direct role in translocation across the membrane. A homomeric c-ring of between 10-14 subunits forms the central stalk rotor element with the F(1) delta and epsilon subunits. This chain is ATP synthase subunit c, found in Synechocystis sp. (strain ATCC 27184 / PCC 6803 / Kazusa).